A 169-amino-acid chain; its full sequence is Ribosome maturation factor RimP (169 aa).

It belongs to the RimP family.

Its subcellular location is the cytoplasm. Required for maturation of 30S ribosomal subunits. This Streptomyces avermitilis (strain ATCC 31267 / DSM 46492 / JCM 5070 / NBRC 14893 / NCIMB 12804 / NRRL 8165 / MA-4680) protein is Ribosome maturation factor RimP.